The chain runs to 246 residues: tRNA (cytidine/uridine-2'-O-)-methyltransferase TrmJ (246 aa).

Residues 79–81, glycine 114, isoleucine 134, and 141–143 contribute to the S-adenosyl-L-methionine site; these read TSA and SSL.

Belongs to the class IV-like SAM-binding methyltransferase superfamily. RNA methyltransferase TrmH family. As to quaternary structure, homodimer.

Its subcellular location is the cytoplasm. The enzyme catalyses cytidine(32) in tRNA + S-adenosyl-L-methionine = 2'-O-methylcytidine(32) in tRNA + S-adenosyl-L-homocysteine + H(+). It carries out the reaction uridine(32) in tRNA + S-adenosyl-L-methionine = 2'-O-methyluridine(32) in tRNA + S-adenosyl-L-homocysteine + H(+). Catalyzes the formation of 2'O-methylated cytidine (Cm32) or 2'O-methylated uridine (Um32) at position 32 in tRNA. The polypeptide is tRNA (cytidine/uridine-2'-O-)-methyltransferase TrmJ (trmJ) (Escherichia coli O6:K15:H31 (strain 536 / UPEC)).